The primary structure comprises 352 residues: Pyrimidine monooxygenase RutA (352 aa).

FMN is bound by residues 49-50, asparagine 115, glutamate 124, 140-141, and serine 189; these read IK and RY.

This sequence belongs to the NtaA/SnaA/DszA monooxygenase family. RutA subfamily.

It carries out the reaction uracil + FMNH2 + NADH + O2 = (Z)-3-ureidoacrylate + FMN + NAD(+) + H2O + H(+). The enzyme catalyses thymine + FMNH2 + NADH + O2 = (Z)-2-methylureidoacrylate + FMN + NAD(+) + H2O + H(+). In terms of biological role, catalyzes the pyrimidine ring opening between N-3 and C-4 by an unusual flavin hydroperoxide-catalyzed mechanism, adding oxygen atoms in the process to yield ureidoacrylate peracid, that immediately reacts with FMN forming ureidoacrylate and FMN-N(5)-oxide. The FMN-N(5)-oxide reacts spontaneously with NADH to produce FMN. Requires the flavin reductase RutF to regenerate FMN in vivo. This is Pyrimidine monooxygenase RutA from Caulobacter segnis (strain ATCC 21756 / DSM 7131 / JCM 7823 / NBRC 15250 / LMG 17158 / TK0059) (Mycoplana segnis).